Here is a 97-residue protein sequence, read N- to C-terminus: Ferredoxin-thioredoxin reductase, variable chain (97 aa).

The protein belongs to the ferredoxin thioredoxin reductase alpha subunit family. Heterodimer of subunit A (variable subunit) and subunit B (catalytic subunit). Heterodimeric FTR forms a complex with ferredoxin and thioredoxin.

It localises to the plastid. It is found in the chloroplast. Functionally, variable subunit of the ferredoxin-thioredoxin reductase (FTR), which catalyzes the two-electron reduction of thioredoxins by the electrons provided by reduced ferredoxin. The protein is Ferredoxin-thioredoxin reductase, variable chain of Zea mays (Maize).